Reading from the N-terminus, the 301-residue chain is Putative S-adenosyl-L-methionine-dependent methyltransferase MMAR_4850 (301 aa).

Residues Asp127 and 156-157 (DL) each bind S-adenosyl-L-methionine.

Belongs to the UPF0677 family.

Its function is as follows. Exhibits S-adenosyl-L-methionine-dependent methyltransferase activity. In Mycobacterium marinum (strain ATCC BAA-535 / M), this protein is Putative S-adenosyl-L-methionine-dependent methyltransferase MMAR_4850.